A 95-amino-acid polypeptide reads, in one-letter code: MNNKLTALIFLGLLAIASCKWFNEKSIQNKIDEKIGKNFLGGMAKAVVHKLAKNEFMCVANVDMTKSCDTHCQKASGEKGYCHGTKCKCGVPLSY.

The N-terminal stretch at 1-19 (MNNKLTALIFLGLLAIASC) is a signal peptide. Residues 55 to 95 (EFMCVANVDMTKSCDTHCQKASGEKGYCHGTKCKCGVPLSY) form the BetaSPN-type CS-alpha/beta domain. Cystine bridges form between C58/C82, C68/C87, and C72/C89.

Belongs to the long chain scorpion toxin family. Class 3 subfamily. Expressed by the venom gland.

The protein resides in the secreted. Functionally, the short synthetic peptide (20-54) has antimicrobial activity against the yeasts F.culmorum (IC(50)=8.8 uM) and F.oxysporum (IC(50)=10 uM), and the Gram-negative bacteria E.coli. The chain is Opiscorpine-1 from Opistophthalmus carinatus (African yellow leg scorpion).